The sequence spans 104 residues: Integration host factor subunit alpha (104 aa).

It belongs to the bacterial histone-like protein family. Heterodimer of an alpha and a beta chain.

Functionally, this protein is one of the two subunits of integration host factor, a specific DNA-binding protein that functions in genetic recombination as well as in transcriptional and translational control. The chain is Integration host factor subunit alpha from Buchnera aphidicola subsp. Cinara cedri (strain Cc).